The sequence spans 732 residues: 1,4-alpha-glucan branching enzyme GlgB (732 aa).

The active-site Nucleophile is the D415. Residue E468 is the Proton donor of the active site.

This sequence belongs to the glycosyl hydrolase 13 family. GlgB subfamily. Monomer.

It catalyses the reaction Transfers a segment of a (1-&gt;4)-alpha-D-glucan chain to a primary hydroxy group in a similar glucan chain.. The protein operates within glycan biosynthesis; glycogen biosynthesis. In terms of biological role, catalyzes the formation of the alpha-1,6-glucosidic linkages in glycogen by scission of a 1,4-alpha-linked oligosaccharide from growing alpha-1,4-glucan chains and the subsequent attachment of the oligosaccharide to the alpha-1,6 position. This is 1,4-alpha-glucan branching enzyme GlgB from Nitrosomonas eutropha (strain DSM 101675 / C91 / Nm57).